We begin with the raw amino-acid sequence, 224 residues long: LexA repressor (224 aa).

Residues 31-51 (RAEIAAEFGFKSANAAEEHLQ) constitute a DNA-binding region (H-T-H motif). Catalysis depends on for autocatalytic cleavage activity residues Ser142 and Lys179.

The protein belongs to the peptidase S24 family. In terms of assembly, homodimer.

The enzyme catalyses Hydrolysis of Ala-|-Gly bond in repressor LexA.. Represses a number of genes involved in the response to DNA damage (SOS response), including recA and lexA. In the presence of single-stranded DNA, RecA interacts with LexA causing an autocatalytic cleavage which disrupts the DNA-binding part of LexA, leading to derepression of the SOS regulon and eventually DNA repair. The protein is LexA repressor of Paracidovorax citrulli (strain AAC00-1) (Acidovorax citrulli).